Reading from the N-terminus, the 151-residue chain is Sperm surface protein Sp17 (151 aa).

Positions 68–98 (FYNNHAFEEQEPPEKSDPKQEESQIPGKEEE) are enriched in basic and acidic residues. Disordered stretches follow at residues 68 to 115 (FYNN…EKEE) and 130 to 151 (AREEVKKMKTDSLQNEEKEENK). The IQ domain maps to 114–143 (EEVAAVKIQAAFRGHVAREEVKKMKTDSLQ).

Homodimer. May interact with ROPN1. Testis- and sperm-specific.

The protein localises to the membrane. Functionally, sperm surface zona pellucida binding protein. Helps to bind spermatozoa to the zona pellucida with high affinity. Might function in binding zona pellucida and carbohydrates. The chain is Sperm surface protein Sp17 (SPA17) from Macaca fascicularis (Crab-eating macaque).